We begin with the raw amino-acid sequence, 457 residues long: Transcription factor PCF7 (457 aa).

Positions 58-84 form a coiled coil; that stretch reads STLHYLLQEKERAQQAHEQLQIYQQQQ. The segment at 95 to 121 is disordered; the sequence is RQPASRGPGGGGGGGDGGGSSGESTPV. Gly residues predominate over residues 101–115; the sequence is GPGGGGGGGDGGGSS. The region spanning 140 to 198 is the TCP domain; that stretch reads RKDRHSKVCTARGLRDRRVRLAAHTAIRFYDVQDRLGYDRPSKAVDWLMRNAKAAIDEL. 2 disordered regions span residues 199-231 and 263-299; these read PDRA…GFGN and KSLF…SNQQ. Residues 212-230 are compositionally biased toward polar residues; that stretch reads STEQPEGTEQANSTSYGFG. Residues 268–278 show a composition bias toward low complexity; it reads SSSTASGAASA.

In terms of assembly, forms homodimers and heterodimers.

The protein resides in the nucleus. Its function is as follows. Transcription activator. Binds the promoter core sequence 5'-GGNCC-3'. The sequence is that of Transcription factor PCF7 (PCF7) from Oryza sativa subsp. indica (Rice).